Consider the following 347-residue polypeptide: MVPESFLLELPKCEHHLHLEGTLEPDLLFPLAKRNNIQLPDHFPQTPEELAVRYTQFKDLQDFLDYYYIGTNVLLKEEDFFDLAWAYFTKVSKQGLVHAELFYDPQSHTTRGVSLETVTRGFERACKKAHEELGITSKLIMCLLRHLPPQDCLQTIEEAEQLIKSGVIHGLGLDSAEKPFPPSLFVECYERAAKINPELRLTAHAGEEGTHQFVSDALDLLNVTRIDHGVNSKQSEELMARLAEQQTLLTVCPLSNVKLQVVQSVKEIPLQLFLDKNIAFSLNSDDPAYFGGYILDNYYQVNKDFPDWDFKVWERIAKNGINGSWCEQKRKEELLAKVDAVVAKYTN.

Histidine 16, histidine 18, and histidine 204 together coordinate Zn(2+). Catalysis depends on glutamate 207, which acts as the Proton donor. Aspartate 285 provides a ligand contact to Zn(2+). Aspartate 286 serves as a coordination point for substrate.

This sequence belongs to the metallo-dependent hydrolases superfamily. Adenosine and AMP deaminases family. Adenine deaminase type 2 subfamily. Zn(2+) is required as a cofactor.

It localises to the cytoplasm. The protein resides in the nucleus. It carries out the reaction adenine + H2O + H(+) = hypoxanthine + NH4(+). In terms of biological role, catalyzes the hydrolytic deamination of adenine to hypoxanthine. Plays an important role in the purine salvage pathway and in nitrogen catabolism. The protein is Adenine deaminase of Candida glabrata (strain ATCC 2001 / BCRC 20586 / JCM 3761 / NBRC 0622 / NRRL Y-65 / CBS 138) (Yeast).